The sequence spans 468 residues: MKNFMDENFLLQTETAQKLYHEHAAKMPIIDYHCHLIPQMVADDYQFKSLTEIWLGGDHYKWRAMRTNGVDERYCTGKDTTDWEKFEKWAETVPYTFRNPLYHWTHLELKTAFGINKVLNPKTAREIFDECNEKLAKPEYSARGMMRRYHVETVCTTDDPVDSLEYHIKTRESGFEIKMLPTWRPDKAMAVEVPADFRAYMEKLSAVSGVTISSFDDMVAALRKRHDFFAEQGCKLSDHGIEEFYAEDYTDAEINAIFNKVYGGTELTKEEILKFKSAMLIVFGEMDWEKGWTQQFHYGAIRNNNTKMFKLLGPDTGFDSIGEFTTAKAMAKFLDRLNTEGKLTKTILYNLNPCANEVIATMLGNFQDGTIPGKIQFGSGWWFLDQKDGMEKQMNALSLLGLLSRFVGMLTDSRSFLSYPRHEYFRRTLCNLLGNDVENGEIPACEIERVNQMVEDICYNNAKKFFQF.

This sequence belongs to the metallo-dependent hydrolases superfamily. Uronate isomerase family.

It catalyses the reaction D-glucuronate = D-fructuronate. The catalysed reaction is aldehydo-D-galacturonate = keto-D-tagaturonate. It functions in the pathway carbohydrate metabolism; pentose and glucuronate interconversion. This chain is Uronate isomerase, found in Phocaeicola vulgatus (strain ATCC 8482 / DSM 1447 / JCM 5826 / CCUG 4940 / NBRC 14291 / NCTC 11154) (Bacteroides vulgatus).